A 281-amino-acid chain; its full sequence is Phosphatidylglycerol--prolipoprotein diacylglyceryl transferase (281 aa).

4 helical membrane passes run 23–43 (VGPL…LFAW), 71–91 (FVIW…VLFY), 107–127 (WDGG…MILF), and 133–153 (ILVW…LGVV). R154 is a binding site for a 1,2-diacyl-sn-glycero-3-phospho-(1'-sn-glycerol). The next 3 helical transmembrane spans lie at 189 to 209 (LYEA…LVWG), 217 to 237 (GFVA…VEFF), and 247 to 267 (LFGG…LLGL).

This sequence belongs to the Lgt family.

Its subcellular location is the cell inner membrane. It carries out the reaction L-cysteinyl-[prolipoprotein] + a 1,2-diacyl-sn-glycero-3-phospho-(1'-sn-glycerol) = an S-1,2-diacyl-sn-glyceryl-L-cysteinyl-[prolipoprotein] + sn-glycerol 1-phosphate + H(+). The protein operates within protein modification; lipoprotein biosynthesis (diacylglyceryl transfer). Its function is as follows. Catalyzes the transfer of the diacylglyceryl group from phosphatidylglycerol to the sulfhydryl group of the N-terminal cysteine of a prolipoprotein, the first step in the formation of mature lipoproteins. The protein is Phosphatidylglycerol--prolipoprotein diacylglyceryl transferase of Brucella abortus (strain S19).